Consider the following 470-residue polypeptide: FAD-dependent monooxygenase nvfK (470 aa).

Positions 1 to 23 (MEKAKFKVVIVGGSITGLTLAHC) are cleaved as a signal peptide. FAD is bound by residues E35, G49, and R108. N121 carries N-linked (GlcNAc...) asparagine glycosylation. Y216 is a catalytic residue. FAD contacts are provided by D308 and A321. A helical membrane pass occupies residues 450–470 (ILMSIVLVAPAWVYIFSSLVW).

Belongs to the paxM FAD-dependent monooxygenase family. FAD serves as cofactor.

Its subcellular location is the membrane. The enzyme catalyses (3R)-3-farnesyl-6-hydroxy-2,3,5-trimethyl-4-oxocyclohexa-1,5-diene-1-carboxylate + 2-oxoglutarate + O2 = (3R)-[(10S)-11-epoxyfarnesyl]-2,3,5-trimethyl-6-oxido-4-oxocyclohexa-1,5-diene-1-carboxylate + succinate + CO2. It participates in secondary metabolite biosynthesis; terpenoid biosynthesis. Its function is as follows. FAD-dependent monooxygenase; part of the gene cluster that mediates the biosynthesis of novofumigatonin, a heavily oxygenated meroterpenoid containing a unique orthoester moiety. The first step of the pathway is the synthesis of 3,5-dimethylorsellinic acid (DMOA) by the polyketide synthase nvfA via condensation of one acetyl-CoA starter unit with 3 malonyl-CoA units and 2 methylations. DMOA is then converted to farnesyl-DMOA by the farnesyltransferase nvfB. Epoxydation by FAD-dependent monooxygenase nvfK, followed by a protonation-initiated cyclization catalyzed by the terpene cyclase nvfL leads to the production of asnavolin H. The short chain dehydrogenase nvfC then as a 3-OH dehydrogenase of asnovolin H to yield chemesin D. There are two branches to synthesize asnovolin A from chemesin D. In one branch, chemesin D undergoes Baeyer-Villiger oxidation by nvfH, methylation by nvfJ, and enoyl reduction by the nvfM D enoylreductase that reduces the double bond between C-5'and C-6', to form respectively asnovolin I, asnovolin K, and asnovolin A. In the other branch, the methylation precedes the Baeyer-Villiger oxidation and the enoyl reduction to yield asnovolin A via the asnovolin J intermediate. Asnovolin A is further converted to fumigatonoid A by the Fe(II)/2-oxoglutarate-dependent dioxygenase nvfI that catalyzes an endoperoxidation reaction. The alpha/beta hydrolase nvfD then acts as an epimerase that converts fumigatonoid A to its C-5' epimer, which then undergoes spontaneous or nvfD-catalyzed lactonization. The following step utilizes the ketoreductase nvfG to produce fumigatonoid B. The dioxygenase nvfE further converts fumigatonoid B into fumigatonoid C. Finally the Fe(II)/2-oxoglutarate-dependent dioxygenase nvfF catalyzes two rounds of oxidation to transform fumigatonoid C into the end product, novofumigatonin A. The chain is FAD-dependent monooxygenase nvfK from Aspergillus novofumigatus (strain IBT 16806).